The following is a 260-amino-acid chain: Thiazole synthase (260 aa).

Residue lysine 96 is the Schiff-base intermediate with DXP of the active site. 1-deoxy-D-xylulose 5-phosphate-binding positions include glycine 157, 183 to 184 (AG), and 205 to 206 (AS).

Belongs to the ThiG family. In terms of assembly, homotetramer. Forms heterodimers with either ThiH or ThiS.

The protein resides in the cytoplasm. The catalysed reaction is [ThiS sulfur-carrier protein]-C-terminal-Gly-aminoethanethioate + 2-iminoacetate + 1-deoxy-D-xylulose 5-phosphate = [ThiS sulfur-carrier protein]-C-terminal Gly-Gly + 2-[(2R,5Z)-2-carboxy-4-methylthiazol-5(2H)-ylidene]ethyl phosphate + 2 H2O + H(+). It functions in the pathway cofactor biosynthesis; thiamine diphosphate biosynthesis. Catalyzes the rearrangement of 1-deoxy-D-xylulose 5-phosphate (DXP) to produce the thiazole phosphate moiety of thiamine. Sulfur is provided by the thiocarboxylate moiety of the carrier protein ThiS. In vitro, sulfur can be provided by H(2)S. This chain is Thiazole synthase, found in Corynebacterium glutamicum (strain R).